A 135-amino-acid polypeptide reads, in one-letter code: Phosphoribosyl-AMP cyclohydrolase (135 aa).

D78 contacts Mg(2+). C79 contacts Zn(2+). Mg(2+)-binding residues include D80 and D82. 2 residues coordinate Zn(2+): C96 and C103.

It belongs to the PRA-CH family. Homodimer. It depends on Mg(2+) as a cofactor. The cofactor is Zn(2+).

It localises to the cytoplasm. The enzyme catalyses 1-(5-phospho-beta-D-ribosyl)-5'-AMP + H2O = 1-(5-phospho-beta-D-ribosyl)-5-[(5-phospho-beta-D-ribosylamino)methylideneamino]imidazole-4-carboxamide. The protein operates within amino-acid biosynthesis; L-histidine biosynthesis; L-histidine from 5-phospho-alpha-D-ribose 1-diphosphate: step 3/9. In terms of biological role, catalyzes the hydrolysis of the adenine ring of phosphoribosyl-AMP. This Cupriavidus metallidurans (strain ATCC 43123 / DSM 2839 / NBRC 102507 / CH34) (Ralstonia metallidurans) protein is Phosphoribosyl-AMP cyclohydrolase.